Reading from the N-terminus, the 545-residue chain is CTP synthase (545 aa).

The segment at 1–266 is amidoligase domain; that stretch reads MTTNYIFVTG…DDYICKRFSL (266 aa). Residue Ser14 participates in CTP binding. Ser14 lines the UTP pocket. ATP-binding positions include 15–20 and Asp72; that span reads SLGKGI. Positions 72 and 140 each coordinate Mg(2+). CTP contacts are provided by residues 147–149, 187–192, and Lys223; these read DIE and KTKPTQ. UTP-binding positions include 187–192 and Lys223; that span reads KTKPTQ. Residue 239-241 participates in ATP binding; that stretch reads KDV. The region spanning 291–542 is the Glutamine amidotransferase type-1 domain; that stretch reads TIGMVGKYIE…VKAANEHQKR (252 aa). Residue Gly352 coordinates L-glutamine. Catalysis depends on Cys379, which acts as the Nucleophile; for glutamine hydrolysis. Residues 380 to 383, Glu403, and Arg470 each bind L-glutamine; that span reads LGMQ. Catalysis depends on residues His515 and Glu517.

The protein belongs to the CTP synthase family. In terms of assembly, homotetramer.

It catalyses the reaction UTP + L-glutamine + ATP + H2O = CTP + L-glutamate + ADP + phosphate + 2 H(+). The enzyme catalyses L-glutamine + H2O = L-glutamate + NH4(+). It carries out the reaction UTP + NH4(+) + ATP = CTP + ADP + phosphate + 2 H(+). The protein operates within pyrimidine metabolism; CTP biosynthesis via de novo pathway; CTP from UDP: step 2/2. Its activity is regulated as follows. Allosterically activated by GTP, when glutamine is the substrate; GTP has no effect on the reaction when ammonia is the substrate. The allosteric effector GTP functions by stabilizing the protein conformation that binds the tetrahedral intermediate(s) formed during glutamine hydrolysis. Inhibited by the product CTP, via allosteric rather than competitive inhibition. In terms of biological role, catalyzes the ATP-dependent amination of UTP to CTP with either L-glutamine or ammonia as the source of nitrogen. Regulates intracellular CTP levels through interactions with the four ribonucleotide triphosphates. This chain is CTP synthase, found in Salmonella newport (strain SL254).